Here is a 360-residue protein sequence, read N- to C-terminus: DNA replication and repair protein RecF (360 aa).

30–37 contacts ATP; it reads GANGSGKT.

Belongs to the RecF family.

It localises to the cytoplasm. Its function is as follows. The RecF protein is involved in DNA metabolism; it is required for DNA replication and normal SOS inducibility. RecF binds preferentially to single-stranded, linear DNA. It also seems to bind ATP. The protein is DNA replication and repair protein RecF of Acinetobacter baumannii (strain ATCC 17978 / DSM 105126 / CIP 53.77 / LMG 1025 / NCDC KC755 / 5377).